The primary structure comprises 539 residues: MAKIIAFDEEARRGLERGLNILADAVRVTLGPRGRNVVLEKKWGAPTITNDGVSIAKEIELDDPFEKIGAELVKEVAKKTDDVAGDGTTTATVLAQALVREGLRNVAAGADPISLKRGIEKAVAAVTEELKAAAKEIETKEEIAATASISAGDSTIGAIIAEAIDKVGKEGVVTVEESNTFGTELELTEGMRFDKGYLSQYFVTDPERQEAVFEDAYILIVNSKISNIKDLLPIVDKVIQSGKQLLIIAEDVDGEALATLVVNKIRGIFKSVAVKAPGFGDRRKAQLQDIAILTGGQVIAEEVGLKLENVTLDLLGTARKVVITKDETTIVEGGGDATEIAARVQQIRNEIGNTDSDYDREKLQERLAKLAGGVAVIKAGAATEVELKERKHRIEDAVRNAKAAVEEGIVAGGGVALIQAGKLAFEKLQLEGDEATGANIVRVAVDAPLKQIALNAGLEPGVVAERVRNLPSGHGLNAATGEYVDMLAAGINDPVKVTRSALLNAASIAGLFLTTEAVVADKPEKNPAPAGDPTGGMDF.

Residues 29 to 32 (TLGP), 86 to 90 (DGTTT), glycine 413, 477 to 479 (NAA), and aspartate 493 contribute to the ATP site.

This sequence belongs to the chaperonin (HSP60) family. As to quaternary structure, forms a cylinder of 14 subunits composed of two heptameric rings stacked back-to-back. Interacts with the co-chaperonin GroES.

The protein localises to the cytoplasm. The catalysed reaction is ATP + H2O + a folded polypeptide = ADP + phosphate + an unfolded polypeptide.. In terms of biological role, together with its co-chaperonin GroES, plays an essential role in assisting protein folding. The GroEL-GroES system forms a nano-cage that allows encapsulation of the non-native substrate proteins and provides a physical environment optimized to promote and accelerate protein folding. In Clavibacter michiganensis subsp. michiganensis (strain NCPPB 382), this protein is Chaperonin GroEL.